A 342-amino-acid chain; its full sequence is 4-hydroxythreonine-4-phosphate dehydrogenase (342 aa).

Residues H140 and T141 each contribute to the substrate site. Positions 175, 220, and 275 each coordinate a divalent metal cation. Substrate is bound by residues K283, N292, and R301.

This sequence belongs to the PdxA family. As to quaternary structure, homodimer. The cofactor is Zn(2+). Mg(2+) serves as cofactor. Co(2+) is required as a cofactor.

It localises to the cytoplasm. The catalysed reaction is 4-(phosphooxy)-L-threonine + NAD(+) = 3-amino-2-oxopropyl phosphate + CO2 + NADH. It functions in the pathway cofactor biosynthesis; pyridoxine 5'-phosphate biosynthesis; pyridoxine 5'-phosphate from D-erythrose 4-phosphate: step 4/5. Its function is as follows. Catalyzes the NAD(P)-dependent oxidation of 4-(phosphooxy)-L-threonine (HTP) into 2-amino-3-oxo-4-(phosphooxy)butyric acid which spontaneously decarboxylates to form 3-amino-2-oxopropyl phosphate (AHAP). The sequence is that of 4-hydroxythreonine-4-phosphate dehydrogenase from Rhizobium meliloti (strain 1021) (Ensifer meliloti).